Here is a 438-residue protein sequence, read N- to C-terminus: Serine--tRNA ligase (438 aa).

235-237 (TAE) is a binding site for L-serine. ATP contacts are provided by residues 266 to 268 (RKE) and valine 282. Residue glutamate 289 participates in L-serine binding. 355–358 (ELVS) lines the ATP pocket. Threonine 393 is a binding site for L-serine.

Belongs to the class-II aminoacyl-tRNA synthetase family. Type-1 seryl-tRNA synthetase subfamily. In terms of assembly, homodimer. The tRNA molecule binds across the dimer.

It catalyses the reaction tRNA(Ser) + L-serine + ATP = L-seryl-tRNA(Ser) + AMP + diphosphate + H(+). It carries out the reaction tRNA(Sec) + L-serine + ATP = L-seryl-tRNA(Sec) + AMP + diphosphate + H(+). The protein operates within aminoacyl-tRNA biosynthesis; selenocysteinyl-tRNA(Sec) biosynthesis; L-seryl-tRNA(Sec) from L-serine and tRNA(Sec): step 1/1. In terms of biological role, catalyzes the attachment of serine to tRNA(Ser). Is also able to aminoacylate tRNA(Sec) with serine, to form the misacylated tRNA L-seryl-tRNA(Sec), which will be further converted into selenocysteinyl-tRNA(Sec). The polypeptide is Serine--tRNA ligase (Helianthus annuus (Common sunflower)).